The following is a 382-amino-acid chain: Lipid-A-disaccharide synthase (382 aa).

Belongs to the LpxB family.

It carries out the reaction 2-N,3-O-bis[(3R)-3-hydroxytetradecanoyl]-alpha-D-glucosaminyl 1-phosphate + UDP-2-N,3-O-bis[(3R)-3-hydroxytetradecanoyl]-alpha-D-glucosamine = lipid A disaccharide (E. coli) + UDP + H(+). The enzyme catalyses a lipid X + a UDP-2-N,3-O-bis[(3R)-3-hydroxyacyl]-alpha-D-glucosamine = a lipid A disaccharide + UDP + H(+). Its pathway is glycolipid biosynthesis; lipid IV(A) biosynthesis; lipid IV(A) from (3R)-3-hydroxytetradecanoyl-[acyl-carrier-protein] and UDP-N-acetyl-alpha-D-glucosamine: step 5/6. Condensation of UDP-2,3-diacylglucosamine and 2,3-diacylglucosamine-1-phosphate to form lipid A disaccharide, a precursor of lipid A, a phosphorylated glycolipid that anchors the lipopolysaccharide to the outer membrane of the cell. This chain is Lipid-A-disaccharide synthase, found in Escherichia coli O7:K1 (strain IAI39 / ExPEC).